A 564-amino-acid chain; its full sequence is Probable diguanylate cyclase DgcQ (564 aa).

The next 2 membrane-spanning stretches (helical) occupy residues 20-40 (LGPGHVVNLCFIVVLLFSTLL) and 360-380 (IALTLLWALFTTMLLISWYVI). In terms of domain architecture, GGDEF spans 428 to 563 (HPFSVIQVDL…GRNRVFASDN (136 aa)). Mg(2+) is bound at residue Asp436. Residues Asn444, His449, and Asp453 each coordinate substrate. Glu479 is a Mg(2+) binding site. Residue Glu479 is the Proton acceptor of the active site.

In terms of assembly, homodimer. The cofactor is Mg(2+).

The protein localises to the cell inner membrane. The catalysed reaction is 2 GTP = 3',3'-c-di-GMP + 2 diphosphate. It participates in glycan metabolism; bacterial cellulose biosynthesis. The protein operates within purine metabolism; 3',5'-cyclic di-GMP biosynthesis. Functionally, catalyzes the synthesis of cyclic-di-GMP (c-di-GMP) via the condensation of 2 GTP molecules. Cyclic-di-GMP is a second messenger which controls cell surface-associated traits in bacteria. Involved in the regulation of cellulose production. The chain is Probable diguanylate cyclase DgcQ from Escherichia coli (strain K12).